A 465-amino-acid chain; its full sequence is Ribulose bisphosphate carboxylase large chain (465 aa).

An N6,N6,N6-trimethyllysine modification is found at lysine 4. Threonine 163 is a binding site for substrate. Lysine 165 (proton acceptor) is an active-site residue. Lysine 167 provides a ligand contact to substrate. 3 residues coordinate Mg(2+): lysine 191, aspartate 193, and glutamate 194. At lysine 191 the chain carries N6-carboxylysine. Histidine 284 acts as the Proton acceptor in catalysis. Substrate contacts are provided by arginine 285, histidine 317, and serine 369.

It belongs to the RuBisCO large chain family. Type I subfamily. In terms of assembly, heterohexadecamer of 8 large chains and 8 small chains; disulfide-linked. The disulfide link is formed within the large subunit homodimers. Mg(2+) is required as a cofactor. Post-translationally, the disulfide bond which can form in the large chain dimeric partners within the hexadecamer appears to be associated with oxidative stress and protein turnover.

The protein resides in the plastid. It is found in the chloroplast. The enzyme catalyses 2 (2R)-3-phosphoglycerate + 2 H(+) = D-ribulose 1,5-bisphosphate + CO2 + H2O. It catalyses the reaction D-ribulose 1,5-bisphosphate + O2 = 2-phosphoglycolate + (2R)-3-phosphoglycerate + 2 H(+). RuBisCO catalyzes two reactions: the carboxylation of D-ribulose 1,5-bisphosphate, the primary event in carbon dioxide fixation, as well as the oxidative fragmentation of the pentose substrate in the photorespiration process. Both reactions occur simultaneously and in competition at the same active site. The polypeptide is Ribulose bisphosphate carboxylase large chain (Trochodendron aralioides (Wheel tree)).